Consider the following 951-residue polypeptide: AP-1 complex subunit beta-1 (951 aa).

An N6-acetyllysine modification is found at Lys318. Tyr574 bears the 3'-nitrotyrosine mark.

The protein belongs to the adaptor complexes large subunit family. Adaptor protein complex 1 (AP-1) is a heterotetramer composed of two large adaptins (gamma-type subunit AP1G1 and beta-type subunit AP1B1), a medium adaptin (mu-type subunit AP1M1 or AP1M2) and a small adaptin (sigma-type subunit AP1S1 or AP1S2 or AP1S3).

The protein localises to the cytoplasmic vesicle. The protein resides in the clathrin-coated vesicle membrane. It localises to the golgi apparatus. Functionally, subunit of clathrin-associated adaptor protein complex 1 that plays a role in protein sorting in the late-Golgi/trans-Golgi network (TGN) and/or endosomes. The AP complexes mediate both the recruitment of clathrin to membranes and the recognition of sorting signals within the cytosolic tails of transmembrane cargo molecules. This is AP-1 complex subunit beta-1 (AP2B1) from Bos taurus (Bovine).